A 291-amino-acid chain; its full sequence is ATP synthase gamma chain (291 aa).

This sequence belongs to the ATPase gamma chain family. In terms of assembly, F-type ATPases have 2 components, CF(1) - the catalytic core - and CF(0) - the membrane proton channel. CF(1) has five subunits: alpha(3), beta(3), gamma(1), delta(1), epsilon(1). CF(0) has three main subunits: a, b and c.

It is found in the cell inner membrane. Its function is as follows. Produces ATP from ADP in the presence of a proton gradient across the membrane. The gamma chain is believed to be important in regulating ATPase activity and the flow of protons through the CF(0) complex. In Ruegeria sp. (strain TM1040) (Silicibacter sp.), this protein is ATP synthase gamma chain.